Reading from the N-terminus, the 873-residue chain is Ectonucleotide pyrophosphatase/phosphodiesterase family member 3 (873 aa).

Residues 1–11 (MESMLTLAMEQ) are Cytoplasmic-facing. A helical; Signal-anchor for type II membrane protein membrane pass occupies residues 12-30 (PVKRNTLKKYKIACIVLLA). Residues 31-873 (LLVIVSLGLG…TYLPTFETTI (843 aa)) are Extracellular-facing. 2 SMB domains span residues 51–93 (QGSC…VEST) and 94–138 (RIWM…GETS). 10 cysteine pairs are disulfide-bonded: C54/C71, C58/C89, C69/C82, C75/C81, C98/C115, C103/C133, C113/C126, C119/C125, C144/C190, and C152/C364. Positions 78–80 (RGD) match the Cell attachment site motif. Positions 160-544 (PVILFSMDGF…HGSLNHLLKV (385 aa)) are phosphodiesterase. Position 167 (D167) interacts with Zn(2+). ATP is bound at residue K204. T205 contributes to the Zn(2+) binding site. T205 acts as the Nucleophile in catalysis. N226 provides a ligand contact to ATP. N-linked (GlcNAc...) asparagine glycosylation occurs at N236. E275 is a binding site for ATP. N279 carries an N-linked (GlcNAc...) asparagine glycan. Y289 contributes to the ATP binding site. N-linked (GlcNAc...) asparagine glycosylation is present at N290. Zn(2+) is bound by residues D325, H329, D372, and H373. 6 disulfide bridges follow: C380–C477, C428–C816, C561–C621, C573–C677, C575–C662, and C785–C795. Residue N425 is glycosylated (N-linked (GlcNAc...) asparagine). H482 serves as a coordination point for Zn(2+). N532, N592, N685, and N697 each carry an N-linked (GlcNAc...) asparagine glycan. Residues 580–873 (NSIQLEQVNQ…TYLPTFETTI (294 aa)) form a nuclease region. 5 residues coordinate Ca(2+): D750, N752, D754, H756, and D758. An N-linked (GlcNAc...) asparagine glycan is attached at N787.

Monomer and homodimer. Zn(2+) serves as cofactor. Post-translationally, N-glycosylated. N-glycosylation is necessary for normal transport to the cell membrane, but is not the apical targeting signal.

It localises to the cell membrane. The protein resides in the apical cell membrane. The protein localises to the secreted. The enzyme catalyses a ribonucleoside 5'-triphosphate + H2O = a ribonucleoside 5'-phosphate + diphosphate + H(+). It carries out the reaction ATP + H2O = AMP + diphosphate + H(+). The catalysed reaction is CTP + H2O = CMP + diphosphate + H(+). It catalyses the reaction GTP + H2O = GMP + diphosphate + H(+). The enzyme catalyses UTP + H2O = UMP + diphosphate + H(+). It carries out the reaction UDP-N-acetyl-alpha-D-glucosamine + H2O = N-acetyl-alpha-D-glucosamine 1-phosphate + UMP + 2 H(+). The catalysed reaction is P(1),P(3)-bis(5'-adenosyl) triphosphate + H2O = AMP + ADP + 2 H(+). It catalyses the reaction P(1),P(4)-bis(5'-adenosyl) tetraphosphate + H2O = AMP + ATP + 2 H(+). The enzyme catalyses P(1),P(5)-bis(5'-adenosyl) pentaphosphate + H2O = adenosine 5'-tetraphosphate + AMP + 2 H(+). It carries out the reaction P(1),P(4)-bis(5'-guanosyl) tetraphosphate + H2O = GMP + GTP + 2 H(+). The catalysed reaction is Hydrolytically removes 5'-nucleotides successively from the 3'-hydroxy termini of 3'-hydroxy-terminated oligonucleotides.. Functionally, hydrolase that metabolizes extracellular nucleotides, including ATP, GTP, UTP and CTP. Limits mast cells and basophils response during inflammation and during the chronic phases of allergic responses by eliminating extracellular ATP, a signaling molecule activating these cells in an autocrine manner. Metabolizes extracellular ATP in the lumen of the small intestine, and thereby prevents ATP-induced apoptosis of intestinal plasmacytoid dendritic cells. Has a broad specificity and can also hydrolyze UDP-GlcNAc into UMP and GlcNAc-1-phosphate and potentially several other intracellular nucleotide sugars, including UDP-GalNAc, CMP-NeuAc, GDP-Fuc, and UDP-GlcA. Thereby, could modulate glycan biosynthesis and protein glycosylation. Can hydrolyze extracellular dinucleoside polyphosphates, including the vasoactive adenosine polyphosphates as well. In addition, displays an alkaline phosphodiesterase activity in vitro. This chain is Ectonucleotide pyrophosphatase/phosphodiesterase family member 3, found in Pongo abelii (Sumatran orangutan).